The following is a 174-amino-acid chain: Protein SHI RELATED SEQUENCE 3 (174 aa).

Zn(2+) is bound by residues C9, C12, C20, C25, C29, and C36. Positions 9–36 (CEDCGNQAKKDCVYMRCRTCCKSKAFHC) form a DNA-binding region, zn(2)-C6 fungal-type; degenerate. A Required for homo- and heterodimerization motif is present at residues 110–113 (IGGH).

The protein belongs to the SHI protein family.

The protein localises to the nucleus. Functionally, transcription activator that binds DNA on 5'-ACTCTAC-3' and promotes auxin homeostasis-regulating gene expression (e.g. YUC genes), as well as genes affecting stamen development, cell expansion and timing of flowering. Synergistically with other SHI-related proteins, regulates gynoecium, stamen and leaf development in a dose-dependent manner, controlling apical-basal patterning. Promotes style and stigma formation, and influences vascular development during gynoecium development. May also have a role in the formation and/or maintenance of the shoot apical meristem (SAM). In Arabidopsis thaliana (Mouse-ear cress), this protein is Protein SHI RELATED SEQUENCE 3 (SRS3).